A 234-amino-acid chain; its full sequence is Demethylmenaquinone methyltransferase (234 aa).

S-adenosyl-L-methionine-binding positions include threonine 58, aspartate 79, and 106 to 107 (NA).

This sequence belongs to the class I-like SAM-binding methyltransferase superfamily. MenG/UbiE family.

It catalyses the reaction a 2-demethylmenaquinol + S-adenosyl-L-methionine = a menaquinol + S-adenosyl-L-homocysteine + H(+). It participates in quinol/quinone metabolism; menaquinone biosynthesis; menaquinol from 1,4-dihydroxy-2-naphthoate: step 2/2. Its function is as follows. Methyltransferase required for the conversion of demethylmenaquinol (DMKH2) to menaquinol (MKH2). The sequence is that of Demethylmenaquinone methyltransferase from Geobacillus sp. (strain WCH70).